We begin with the raw amino-acid sequence, 170 residues long: MNTKTTNFTFAFDKKNLNLAETIIKKYPPNGKRSAILPLLDLAQRQNGGWLHISAIEYVANMLEMPYMRAYEVATFYSMFNLSPVGKYHIQVCTTTPCWLRGSDDIMKICEKKLAIKHKETTKDQKFTLSEIECLGACVNAPVVQINDDYYEDLNEAKMEKLIEQYLNDL.

Cys93, Cys98, Cys134, and Cys138 together coordinate [2Fe-2S] cluster.

This sequence belongs to the complex I 24 kDa subunit family. The cofactor is [2Fe-2S] cluster.

The catalysed reaction is a quinone + NADH + 5 H(+)(in) = a quinol + NAD(+) + 4 H(+)(out). NDH-1 shuttles electrons from NADH, via FMN and iron-sulfur (Fe-S) centers, to quinones in the respiratory chain. Couples the redox reaction to proton translocation (for every two electrons transferred, four hydrogen ions are translocated across the cytoplasmic membrane), and thus conserves the redox energy in a proton gradient. This chain is NADH-quinone oxidoreductase subunit E (nuoE), found in Rickettsia typhi (strain ATCC VR-144 / Wilmington).